The primary structure comprises 143 residues: Transcriptional regulator MraZ (143 aa).

SpoVT-AbrB domains lie at 5 to 47 (EFEH…PMTE) and 76 to 119 (ATEC…SAER).

This sequence belongs to the MraZ family. In terms of assembly, forms oligomers.

It is found in the cytoplasm. It localises to the nucleoid. This Levilactobacillus brevis (strain ATCC 367 / BCRC 12310 / CIP 105137 / JCM 1170 / LMG 11437 / NCIMB 947 / NCTC 947) (Lactobacillus brevis) protein is Transcriptional regulator MraZ.